The sequence spans 556 residues: Interleukin-1 receptor-like 1 (556 aa).

The first 18 residues, 1–18 (MGFWILAILTILMYSTAA), serve as a signal peptide directing secretion. Ig-like C2-type domains lie at 19-103 (KFSK…ANVT) and 114-197 (PDYL…VTAT). The Extracellular segment spans residues 19–328 (KFSKQSWGLE…SRKNPIDHHS (310 aa)). Residues Cys36 and Cys87 are joined by a disulfide bond. Residues Asn54, Asn95, Asn101, Asn140, and Asn191 are each glycosylated (N-linked (GlcNAc...) asparagine). Cystine bridges form between Cys111–Cys151 and Cys133–Cys181. Positions 198-211 (RSFTVKDEQGFSLF) are flexible linker. The region spanning 212 to 319 (PVIGAPAQNE…GLRRHTVRLS (108 aa)) is the Ig-like C2-type 3 domain. Asn232, Asn254, and Asn273 each carry an N-linked (GlcNAc...) asparagine glycan. Disulfide bonds link Cys235/Cys303 and Cys238/Cys282. A Glycyl lysine isopeptide (Lys-Gly) (interchain with G-Cter in ubiquitin) cross-link involves residue Lys321. The chain crosses the membrane as a helical span at residues 329 to 349 (IYCIIAVCSVFLMLINVLVII). At 350 to 556 (LKMFWIEATL…SLTPLAAQKQ (207 aa)) the chain is on the cytoplasmic side. Residues 375–535 (KLYDAYVVYP…KFWKHVRYQM (161 aa)) form the TIR domain. The active site involves Glu461.

It belongs to the interleukin-1 receptor family. In terms of assembly, interacts with MYD88, IRAK1, IRAK4, and TRAF6. Bound to its ligand IL-33, interacts with IL1RAP to form the minimal interleukin-33 signaling complex with a 1:1:1 stoichiometry. Interacts with KIT (bound to KITLG/SCF). A mast cell-specific KITLG/SCF-induced interleukin-33 signaling complex contains IL1RL1, IL1RAP, KIT and MYD88. Interacts with TMED1. Ubiquitinated at Lys-321 in a FBXL19-mediated manner; leading to proteasomal degradation. Ubiquitination by TRAF6 via 'Lys-27'-linked polyubiquitination and deubiquitination by USP38 serves as a critical regulatory mechanism for fine-tuning IL1RL1-mediated inflammatory response. Highly expressed in kidney, lung, placenta, stomach, skeletal muscle, colon and small intestine. Isoform A is prevalently expressed in the lung, testis, placenta, stomach and colon. Isoform B is more abundant in the brain, kidney and the liver. Isoform C is not detected in brain, heart, liver, kidney and skeletal muscle. Expressed on T-cells in fibrotic liver; at protein level. Overexpressed in fibrotic and cirrhotic liver.

Its subcellular location is the cell membrane. The protein localises to the secreted. It catalyses the reaction NAD(+) + H2O = ADP-D-ribose + nicotinamide + H(+). In terms of biological role, receptor for interleukin-33 (IL-33) which plays crucial roles in innate and adaptive immunity, contributing to tissue homeostasis and responses to environmental stresses together with coreceptor IL1RAP. Its stimulation recruits MYD88, IRAK1, IRAK4, and TRAF6, followed by phosphorylation of MAPK3/ERK1 and/or MAPK1/ERK2, MAPK14, and MAPK8. Possibly involved in helper T-cell function. Upon tissue injury, induces UCP2-dependent mitochondrial rewiring that attenuates the generation of reactive oxygen species and preserves the integrity of Krebs cycle required for persistent production of itaconate and subsequent GATA3-dependent differentiation of inflammation-resolving alternatively activated macrophages. Its function is as follows. Inhibits IL-33 signaling. This Homo sapiens (Human) protein is Interleukin-1 receptor-like 1 (IL1RL1).